The primary structure comprises 196 residues: FMN-dependent NADH:quinone oxidoreductase (196 aa).

FMN contacts are provided by residues serine 10, serine 16–serine 18, methionine 93–phenylalanine 96, and threonine 137–glycine 140.

Belongs to the azoreductase type 1 family. In terms of assembly, homodimer. It depends on FMN as a cofactor.

It catalyses the reaction 2 a quinone + NADH + H(+) = 2 a 1,4-benzosemiquinone + NAD(+). The enzyme catalyses N,N-dimethyl-1,4-phenylenediamine + anthranilate + 2 NAD(+) = 2-(4-dimethylaminophenyl)diazenylbenzoate + 2 NADH + 2 H(+). Functionally, quinone reductase that provides resistance to thiol-specific stress caused by electrophilic quinones. In terms of biological role, also exhibits azoreductase activity. Catalyzes the reductive cleavage of the azo bond in aromatic azo compounds to the corresponding amines. This chain is FMN-dependent NADH:quinone oxidoreductase, found in Shewanella amazonensis (strain ATCC BAA-1098 / SB2B).